The sequence spans 197 residues: Adenylyl-sulfate kinase (197 aa).

31–38 serves as a coordination point for ATP; sequence GLSGAGKS. The active-site Phosphoserine intermediate is S105.

It belongs to the APS kinase family.

It catalyses the reaction adenosine 5'-phosphosulfate + ATP = 3'-phosphoadenylyl sulfate + ADP + H(+). It functions in the pathway sulfur metabolism; hydrogen sulfide biosynthesis; sulfite from sulfate: step 2/3. Functionally, catalyzes the synthesis of activated sulfate. The protein is Adenylyl-sulfate kinase of Aeromonas hydrophila subsp. hydrophila (strain ATCC 7966 / DSM 30187 / BCRC 13018 / CCUG 14551 / JCM 1027 / KCTC 2358 / NCIMB 9240 / NCTC 8049).